The chain runs to 148 residues: D-aminoacyl-tRNA deacylase (148 aa).

The short motif at 137 to 138 (GP) is the Gly-cisPro motif, important for rejection of L-amino acids element.

It belongs to the DTD family. As to quaternary structure, homodimer.

It is found in the cytoplasm. The catalysed reaction is glycyl-tRNA(Ala) + H2O = tRNA(Ala) + glycine + H(+). The enzyme catalyses a D-aminoacyl-tRNA + H2O = a tRNA + a D-alpha-amino acid + H(+). Functionally, an aminoacyl-tRNA editing enzyme that deacylates mischarged D-aminoacyl-tRNAs. Also deacylates mischarged glycyl-tRNA(Ala), protecting cells against glycine mischarging by AlaRS. Acts via tRNA-based rather than protein-based catalysis; rejects L-amino acids rather than detecting D-amino acids in the active site. By recycling D-aminoacyl-tRNA to D-amino acids and free tRNA molecules, this enzyme counteracts the toxicity associated with the formation of D-aminoacyl-tRNA entities in vivo and helps enforce protein L-homochirality. The chain is D-aminoacyl-tRNA deacylase from Enterococcus faecalis (strain ATCC 700802 / V583).